We begin with the raw amino-acid sequence, 210 residues long: N-(5'-phosphoribosyl)anthranilate isomerase (210 aa).

It belongs to the TrpF family.

It catalyses the reaction N-(5-phospho-beta-D-ribosyl)anthranilate = 1-(2-carboxyphenylamino)-1-deoxy-D-ribulose 5-phosphate. Its pathway is amino-acid biosynthesis; L-tryptophan biosynthesis; L-tryptophan from chorismate: step 3/5. The sequence is that of N-(5'-phosphoribosyl)anthranilate isomerase from Magnetococcus marinus (strain ATCC BAA-1437 / JCM 17883 / MC-1).